The primary structure comprises 310 residues: AT-hook motif nuclear-localized protein 15 (310 aa).

2 disordered regions span residues 15–112 (VESP…KESP) and 239–310 (EEEQ…PPSY). Polar residues-rich tracts occupy residues 31 to 41 (SNNNNPPTMTR) and 51 to 67 (TTNN…SQEE). A DNA-binding region (a.T hook) is located at residues 88 to 100 (RRPRGRPPGSKNK). Low complexity predominate over residues 94–104 (PPGSKNKPKSP). The 140-residue stretch at 112–251 (PNSLQSHVLE…QQQEQPLQLE (140 aa)) folds into the PPC domain. Over residues 301 to 310 (GPPPRAPPSY) the composition is skewed to pro residues.

The protein localises to the nucleus. Its function is as follows. Transcription factor that specifically binds AT-rich DNA sequences related to the nuclear matrix attachment regions (MARs). Binds the DNA sequence GNFEI (GA-negative feedback element I) in the GA3OX1 promoter. Negatively regulates plant innate immunity (PTI) to pathogens through the down-regulation of the PAMP-triggered FRK1 expression. This Arabidopsis thaliana (Mouse-ear cress) protein is AT-hook motif nuclear-localized protein 15.